We begin with the raw amino-acid sequence, 438 residues long: Putative cytochrome P450 140 (438 aa).

C381 is a heme binding site.

It belongs to the cytochrome P450 family. It depends on heme as a cofactor.

In Mycobacterium bovis (strain ATCC BAA-935 / AF2122/97), this protein is Putative cytochrome P450 140 (cyp140).